Here is a 363-residue protein sequence, read N- to C-terminus: Dihydroorotate dehydrogenase (quinone) (363 aa).

FMN is bound by residues 62-66 (AGYDK) and threonine 86. Lysine 66 contributes to the substrate binding site. A substrate-binding site is contributed by 111 to 115 (NRLGF). 2 residues coordinate FMN: asparagine 139 and asparagine 170. A substrate-binding site is contributed by asparagine 170. The active-site Nucleophile is the serine 173. Asparagine 175 contributes to the substrate binding site. Lysine 215 and serine 243 together coordinate FMN. Residue 244–245 (NT) participates in substrate binding. FMN is bound by residues glycine 266, glycine 295, and 316–317 (YS).

It belongs to the dihydroorotate dehydrogenase family. Type 2 subfamily. As to quaternary structure, monomer. FMN serves as cofactor.

It localises to the cell membrane. The catalysed reaction is (S)-dihydroorotate + a quinone = orotate + a quinol. Its pathway is pyrimidine metabolism; UMP biosynthesis via de novo pathway; orotate from (S)-dihydroorotate (quinone route): step 1/1. Functionally, catalyzes the conversion of dihydroorotate to orotate with quinone as electron acceptor. The chain is Dihydroorotate dehydrogenase (quinone) from Agrobacterium fabrum (strain C58 / ATCC 33970) (Agrobacterium tumefaciens (strain C58)).